Here is a 398-residue protein sequence, read N- to C-terminus: Bombesin receptor subtype-3 (398 aa).

Residues 1–40 lie on the Extracellular side of the membrane; that stretch reads MAQRQPHSPNQTLISITNDTESSSVVSNDNTNKGRSGDNS. 2 N-linked (GlcNAc...) asparagine glycosylation sites follow: N10 and N18. The helical transmembrane segment at 41–62 threads the bilayer; sequence PGIEALCAIYITYAVIISVGIL. Residues 63–81 are Cytoplasmic-facing; the sequence is GNAILIKVFFKTKSMQTVP. A helical transmembrane segment spans residues 82–102; that stretch reads NIFITSLAFGDLLLLLTCVPV. Topologically, residues 103–120 are extracellular; the sequence is DATHYLAEGWLFGRIGCK. An intrachain disulfide couples C119 to C202. The helical transmembrane segment at 121 to 142 threads the bilayer; it reads VLSFIRLTSVGVSVFTLTILSA. Residues 143-162 lie on the Cytoplasmic side of the membrane; sequence DRYKAVVKPLERQPSNAILK. Residues 163–183 form a helical membrane-spanning segment; that stretch reads TCIKAGCVWIVSMIFALPEAI. The Extracellular segment spans residues 184 to 219; the sequence is FSNVYSFRDPNKNVTFESCTSYPVSKKLLQEIHSLL. Residues 220-240 form a helical membrane-spanning segment; sequence CFLVFYIIPLSIISVYYSLIA. At 241–271 the chain is on the cytoplasmic side; the sequence is RTLYKSTLNIPTEEQGHARKQIESRKRIART. The helical transmembrane segment at 272-292 threads the bilayer; sequence VLVLVALFALCWLPNHLLYLY. The Extracellular segment spans residues 293-312; the sequence is HSFTSQTYVDPSAMHFIFTI. Residues 313 to 332 traverse the membrane as a helical segment; it reads FSRVLAFSNSCVNPFALYWL. Residues 333–398 are Cytoplasmic-facing; that stretch reads SKTFQKHFKA…CSVKQAEDRV (66 aa). The S-palmitoyl cysteine moiety is linked to residue C346.

This sequence belongs to the G-protein coupled receptor 1 family. As to quaternary structure, interacts with C6orf89.

The protein resides in the cell membrane. Functionally, role in sperm cell division, maturation, or function. This receptor mediates its action by association with G proteins that activate a phosphatidylinositol-calcium second messenger system. The protein is Bombesin receptor subtype-3 (BRS3) of Macaca mulatta (Rhesus macaque).